The sequence spans 321 residues: MTRPPLVRGIFSLGLSVAVLKGVEKTVRKHLERQGWIEPQKVDYELIFTIDRLKNLVDNKREALTAEQPDAGELSWRKVFNFISRQSSELDARIYVLILLLSFLLPIAWTVLDGDRETTLEDKDNDCNVDLIENERRLKHYNDGERAVLQFGKNRSEPIILSYKDMNVLEGEHEFTSKEEHSNSHLTSKSENALSQVGSEDLLGCHLEKQLEEDKNEPNGEADGEDDNNREKDCSSSSEVESQSKCRKESTAEPDSLSRDTRTTSSLKSSTSFPISFKGSIDLKSLNQPSSLLHIQVSPTKSSNLDAQVNTEQAYSQPFRY.

Positions 1–22 (MTRPPLVRGIFSLGLSVAVLKG) are cleaved as a signal peptide. Positions 73-125 (ELSWRKVFNFISRQSSELDARIYVLILLLSFLLPIAWTVLDGDRETTLEDKDN) are TSC13-binding. Residues 94 to 114 (IYVLILLLSFLLPIAWTVLDG) form a helical membrane-spanning segment. An OSH1-binding region spans residues 139-195 (KHYNDGERAVLQFGKNRSEPIILSYKDMNVLEGEHEFTSKEEHSNSHLTSKSENALS). S156 is modified (phosphoserine). Positions 174–183 (EFTSKEEHSN) are enriched in basic and acidic residues. Residues 174–194 (EFTSKEEHSNSHLTSKSENAL) are disordered. The segment covering 184-194 (SHLTSKSENAL) has biased composition (polar residues). S199 bears the Phosphoserine mark. A disordered region spans residues 210–275 (QLEEDKNEPN…SLKSSTSFPI (66 aa)). The VAC8-binding stretch occupies residues 233 to 321 (DCSSSSEVES…EQAYSQPFRY (89 aa)). The span at 242–262 (SQSKCRKESTAEPDSLSRDTR) shows a compositional bias: basic and acidic residues. Residues 263 to 272 (TTSSLKSSTS) show a composition bias toward low complexity. Residues S285 and S298 each carry the phosphoserine modification. The tract at residues 299 to 321 (PTKSSNLDAQVNTEQAYSQPFRY) is disordered.

In terms of assembly, interacts with OSH1, TSC13 and VAC8.

It is found in the nucleus outer membrane. Its function is as follows. Involved in the formation of nucleus-vacuole (NV) junctions during piecemeal microautophagy of the nucleus (PMN). NV junctions are interorganelle interfaces mediated by NVJ1 in the nuclear envelope and VAC8 on the vacuole membrane. Together, NVJ1 and VAC8 form Velcro-like patches through which teardrop-like portions of the nucleus are pinched off into the vacuolar lumen and degraded by the PMN process. Also acts as an outer-nuclear membrane receptor for OSH1 and TSC13. The protein is Nucleus-vacuole junction protein 1 (NVJ1) of Saccharomyces cerevisiae (strain YJM789) (Baker's yeast).